We begin with the raw amino-acid sequence, 156 residues long: Ribosomal RNA large subunit methyltransferase H (156 aa).

S-adenosyl-L-methionine contacts are provided by residues L73, G104, and 123–128 (LSALTL).

The protein belongs to the RNA methyltransferase RlmH family. Homodimer.

The protein localises to the cytoplasm. The catalysed reaction is pseudouridine(1915) in 23S rRNA + S-adenosyl-L-methionine = N(3)-methylpseudouridine(1915) in 23S rRNA + S-adenosyl-L-homocysteine + H(+). In terms of biological role, specifically methylates the pseudouridine at position 1915 (m3Psi1915) in 23S rRNA. The protein is Ribosomal RNA large subunit methyltransferase H of Vibrio parahaemolyticus serotype O3:K6 (strain RIMD 2210633).